We begin with the raw amino-acid sequence, 337 residues long: Tetraacyldisaccharide 4'-kinase (337 aa).

72 to 79 lines the ATP pocket; it reads TVGGSGKT.

Belongs to the LpxK family.

It catalyses the reaction a lipid A disaccharide + ATP = a lipid IVA + ADP + H(+). Its pathway is glycolipid biosynthesis; lipid IV(A) biosynthesis; lipid IV(A) from (3R)-3-hydroxytetradecanoyl-[acyl-carrier-protein] and UDP-N-acetyl-alpha-D-glucosamine: step 6/6. Transfers the gamma-phosphate of ATP to the 4'-position of a tetraacyldisaccharide 1-phosphate intermediate (termed DS-1-P) to form tetraacyldisaccharide 1,4'-bis-phosphate (lipid IVA). This Shewanella sediminis (strain HAW-EB3) protein is Tetraacyldisaccharide 4'-kinase.